We begin with the raw amino-acid sequence, 374 residues long: Queuine tRNA-ribosyltransferase (374 aa).

The active-site Proton acceptor is the D89. Substrate-binding positions include 89–93, D143, Q187, and G214; that span reads DSGGF. Residues 245–251 are RNA binding; sequence GVGKPED. Catalysis depends on D264, which acts as the Nucleophile. Residues 269–273 form an RNA binding; important for wobble base 34 recognition region; it reads TRNAR. 4 residues coordinate Zn(2+): C302, C304, C307, and H333.

It belongs to the queuine tRNA-ribosyltransferase family. As to quaternary structure, homodimer. Within each dimer, one monomer is responsible for RNA recognition and catalysis, while the other monomer binds to the replacement base PreQ1. It depends on Zn(2+) as a cofactor.

The catalysed reaction is 7-aminomethyl-7-carbaguanine + guanosine(34) in tRNA = 7-aminomethyl-7-carbaguanosine(34) in tRNA + guanine. Its pathway is tRNA modification; tRNA-queuosine biosynthesis. Functionally, catalyzes the base-exchange of a guanine (G) residue with the queuine precursor 7-aminomethyl-7-deazaguanine (PreQ1) at position 34 (anticodon wobble position) in tRNAs with GU(N) anticodons (tRNA-Asp, -Asn, -His and -Tyr). Catalysis occurs through a double-displacement mechanism. The nucleophile active site attacks the C1' of nucleotide 34 to detach the guanine base from the RNA, forming a covalent enzyme-RNA intermediate. The proton acceptor active site deprotonates the incoming PreQ1, allowing a nucleophilic attack on the C1' of the ribose to form the product. After dissociation, two additional enzymatic reactions on the tRNA convert PreQ1 to queuine (Q), resulting in the hypermodified nucleoside queuosine (7-(((4,5-cis-dihydroxy-2-cyclopenten-1-yl)amino)methyl)-7-deazaguanosine). The sequence is that of Queuine tRNA-ribosyltransferase from Psychromonas ingrahamii (strain DSM 17664 / CCUG 51855 / 37).